Reading from the N-terminus, the 256-residue chain is Trans-aconitate 2-methyltransferase (256 aa).

It belongs to the methyltransferase superfamily. Tam family.

Its subcellular location is the cytoplasm. The enzyme catalyses trans-aconitate + S-adenosyl-L-methionine = (E)-3-(methoxycarbonyl)pent-2-enedioate + S-adenosyl-L-homocysteine. In terms of biological role, catalyzes the S-adenosylmethionine monomethyl esterification of trans-aconitate. The polypeptide is Trans-aconitate 2-methyltransferase (Rhizobium etli (strain ATCC 51251 / DSM 11541 / JCM 21823 / NBRC 15573 / CFN 42)).